We begin with the raw amino-acid sequence, 115 residues long: Anamorsin homolog 1 (115 aa).

Positions 30–115 (VKEATKGEDC…KVKLNLTDDI (86 aa)) are disordered. Cys-39, Cys-46, Cys-49, and Cys-51 together coordinate [2Fe-2S] cluster. The fe-S binding site A stretch occupies residues 39 to 51 (CTTRRRACKNCTC). 4 residues coordinate [4Fe-4S] cluster: Cys-77, Cys-80, Cys-88, and Cys-91. Short sequence motifs (cx2C motif) lie at residues 77–80 (CGNC) and 88–91 (CATC). The interval 77–91 (CGNCAKGDAFRCATC) is fe-S binding site B.

It belongs to the anamorsin family. As to quaternary structure, monomer. It depends on [2Fe-2S] cluster as a cofactor. The cofactor is [4Fe-4S] cluster.

It localises to the cytoplasm. The protein resides in the mitochondrion intermembrane space. Component of the cytosolic iron-sulfur (Fe-S) protein assembly (CIA) machinery. Required for the maturation of extramitochondrial Fe-S proteins. Part of an electron transfer chain functioning in an early step of cytosolic Fe-S biogenesis, facilitating the de novo assembly of a [4Fe-4S] cluster on the cytosolic Fe-S scaffold complex. Electrons are transferred from NADPH via a FAD- and FMN-containing diflavin oxidoreductase. Together with the diflavin oxidoreductase, also required for the assembly of the diferric tyrosyl radical cofactor of ribonucleotide reductase (RNR), probably by providing electrons for reduction during radical cofactor maturation in the catalytic small subunit. The sequence is that of Anamorsin homolog 1 from Trypanosoma cruzi (strain CL Brener).